The sequence spans 296 residues: Giardin subunit alpha-4 (296 aa).

4 Annexin repeats span residues 3–72, 74–146, 153–223, and 226–294; these read ATVS…VHAW, SRFE…GWVK, KSIK…AHHW, and DPGQ…VFWR.

Belongs to the annexin family. Giardin subunit alpha subfamily.

It localises to the cytoplasm. It is found in the cytoskeleton. Its function is as follows. Giardins are involved in parasite attachment to the intestinal mucosa and in the cytoskeletal disassembly and reassembly that marks the transition from infectious trophozoite to transmissible cyst. They may interact with other cytoskeletal proteins such as microtubules in the microribbons or crossbridges, to maintain the integrity of the ventral disk. In Giardia intestinalis (Giardia lamblia), this protein is Giardin subunit alpha-4.